The primary structure comprises 206 residues: BAG family molecular chaperone regulator 1B (206 aa).

The BAG domain occupies 122–202; sequence IEAYIDELQQ…QYLSKLDSTK (81 aa). Ser144 bears the Phosphoserine mark.

In terms of assembly, binds to the ATPase domain of HSP70/HSC chaperones.

Inhibits the chaperone activity of HSP70/HSC70 by promoting substrate release. The chain is BAG family molecular chaperone regulator 1B (bag102) from Schizosaccharomyces pombe (strain 972 / ATCC 24843) (Fission yeast).